We begin with the raw amino-acid sequence, 102 residues long: NADH-quinone oxidoreductase subunit K (102 aa).

The next 3 membrane-spanning stretches (helical) occupy residues Leu6–Val26, Ile30–Val50, and Val62–Leu82.

This sequence belongs to the complex I subunit 4L family. In terms of assembly, NDH-1 is composed of 13 different subunits. Subunits NuoA, H, J, K, L, M, N constitute the membrane sector of the complex.

The protein resides in the cell inner membrane. The catalysed reaction is a quinone + NADH + 5 H(+)(in) = a quinol + NAD(+) + 4 H(+)(out). Its function is as follows. NDH-1 shuttles electrons from NADH, via FMN and iron-sulfur (Fe-S) centers, to quinones in the respiratory chain. The immediate electron acceptor for the enzyme in this species is believed to be ubiquinone. Couples the redox reaction to proton translocation (for every two electrons transferred, four hydrogen ions are translocated across the cytoplasmic membrane), and thus conserves the redox energy in a proton gradient. The protein is NADH-quinone oxidoreductase subunit K of Pseudomonas putida (strain ATCC 700007 / DSM 6899 / JCM 31910 / BCRC 17059 / LMG 24140 / F1).